Reading from the N-terminus, the 646-residue chain is ATP-dependent rRNA helicase SPB4 (646 aa).

A Q motif motif is present at residues 15 to 43 (WGALTPSLAPWILDYLSSMGFEQPTPVQK). The 202-residue stretch at 46–247 (FDIFRGNKDV…TVGLLYPHKI (202 aa)) folds into the Helicase ATP-binding domain. 59–66 (AVTGSGKT) is a binding site for ATP. The DEAD box motif lies at 195 to 198 (DEAD). The 151-residue stretch at 284–434 (ALCQLLERLE…PLAKPPVSVT (151 aa)) folds into the Helicase C-terminal domain. 2 stretches are compositionally biased toward basic and acidic residues: residues 539–548 (KKEKAAREAQ) and 566–581 (NEAWSGKHEHEDVKAA). The interval 539–646 (KKEKAAREAQ…GGDEFEGFDD (108 aa)) is disordered. Residues 572 to 623 (KHEHEDVKAARREKKRRKREAQRLGDMTEPEREEQRKLDEMIAEVRRRNAEA) are a coiled coil. The span at 582–591 (RREKKRRKRE) shows a compositional bias: basic residues. Over residues 600–621 (EPEREEQRKLDEMIAEVRRRNA) the composition is skewed to basic and acidic residues. The segment covering 622–631 (EAPTPAAQAA) has biased composition (low complexity).

This sequence belongs to the DEAD box helicase family. DDX55/SPB4 subfamily. As to quaternary structure, component of pre-60S ribosomal complexes.

It is found in the nucleus. It localises to the nucleolus. The catalysed reaction is ATP + H2O = ADP + phosphate + H(+). ATP-binding RNA helicase involved in the biogenesis of 60S ribosomal subunits. Binds 90S pre-ribosomal particles and dissociates from pre-60S ribosomal particles after processing of 27SB pre-rRNA. Required for the normal formation of 18S rRNA through the processing of pre-rRNAs at sites A0, A1 and A2, and the normal formation of 25S and 5.8S rRNAs through the processing of pre-rRNAs at sites C1 and C2. This Chaetomium globosum (strain ATCC 6205 / CBS 148.51 / DSM 1962 / NBRC 6347 / NRRL 1970) (Soil fungus) protein is ATP-dependent rRNA helicase SPB4.